The primary structure comprises 598 residues: NADH-quinone oxidoreductase subunit C/D (598 aa).

The NADH dehydrogenase I subunit C stretch occupies residues 1 to 189 (MTDLTTSDSL…DPYVLTKQKE (189 aa)). The tract at residues 213 to 598 (DFMFLNLGPN…IDFVMSDVDR (386 aa)) is NADH dehydrogenase I subunit D.

In the N-terminal section; belongs to the complex I 30 kDa subunit family. This sequence in the C-terminal section; belongs to the complex I 49 kDa subunit family. As to quaternary structure, NDH-1 is composed of 13 different subunits. Subunits NuoB, CD, E, F, and G constitute the peripheral sector of the complex.

The protein localises to the cell inner membrane. The catalysed reaction is a quinone + NADH + 5 H(+)(in) = a quinol + NAD(+) + 4 H(+)(out). NDH-1 shuttles electrons from NADH, via FMN and iron-sulfur (Fe-S) centers, to quinones in the respiratory chain. The immediate electron acceptor for the enzyme in this species is believed to be ubiquinone. Couples the redox reaction to proton translocation (for every two electrons transferred, four hydrogen ions are translocated across the cytoplasmic membrane), and thus conserves the redox energy in a proton gradient. The polypeptide is NADH-quinone oxidoreductase subunit C/D (Yersinia pestis bv. Antiqua (strain Angola)).